A 1285-amino-acid polypeptide reads, in one-letter code: Nuclear pore complex protein NUP133 (1285 aa).

Disordered stretches follow at residues 1–53 and 522–580; these read MFSP…PAPW and EPPE…QTAR. Polar residues predominate over residues 31 to 41; that stretch reads TPATQNRNNFI. Composition is skewed to basic and acidic residues over residues 523–544 and 553–569; these read PPER…DETR and TAGR…DKGN.

This sequence belongs to the nucleoporin Nup133 family. Part of the nuclear pore complex (NPC). The NPC has an eight-fold symmetrical structure comprising a central transport channel and two rings, the cytoplasmic and nuclear rings, to which eight filaments are attached. The cytoplasmic filaments have loose ends, while the nuclear filaments are joined in a distal ring, forming a nuclear basket. NPCs are highly dynamic in configuration and composition, and can be devided in 3 subcomplexes, the NUP62 subcomplex, the NUP107-160 subcomplex and the NUP93 subcomplex, containing approximately 30 different nucleoporin proteins.

Its subcellular location is the nucleus envelope. It is found in the nucleus. It localises to the nuclear pore complex. The polypeptide is Nuclear pore complex protein NUP133 (Arabidopsis thaliana (Mouse-ear cress)).